The following is a 100-amino-acid chain: Regulatory protein NosR (100 aa).

The protein resides in the cell membrane. Transcriptional activator of the nitrous-oxide reductase gene NosZ. The chain is Regulatory protein NosR (nosR) from Pseudomonas aeruginosa.